We begin with the raw amino-acid sequence, 123 residues long: Small ribosomal subunit protein uS12 (123 aa).

The disordered stretch occupies residues M1 to G32. Residues R9 to K18 show a composition bias toward basic residues. D89 is modified (3-methylthioaspartic acid).

The protein belongs to the universal ribosomal protein uS12 family. In terms of assembly, part of the 30S ribosomal subunit. Contacts proteins S8 and S17. May interact with IF1 in the 30S initiation complex.

Its function is as follows. With S4 and S5 plays an important role in translational accuracy. Interacts with and stabilizes bases of the 16S rRNA that are involved in tRNA selection in the A site and with the mRNA backbone. Located at the interface of the 30S and 50S subunits, it traverses the body of the 30S subunit contacting proteins on the other side and probably holding the rRNA structure together. The combined cluster of proteins S8, S12 and S17 appears to hold together the shoulder and platform of the 30S subunit. In Thermobifida fusca (strain YX), this protein is Small ribosomal subunit protein uS12.